The chain runs to 205 residues: Coenzyme Q-binding protein COQ10, mitochondrial (205 aa).

The protein belongs to the COQ10 family. As to quaternary structure, interacts with coenzyme Q.

The protein localises to the mitochondrion inner membrane. Required for the function of coenzyme Q in the respiratory chain. May serve as a chaperone or may be involved in the transport of Q6 from its site of synthesis to the catalytic sites of the respiratory complexes. This is Coenzyme Q-binding protein COQ10, mitochondrial (coq10-1) from Dictyostelium discoideum (Social amoeba).